Consider the following 156-residue polypeptide: Small ribosomal subunit protein uS7 (156 aa).

The protein belongs to the universal ribosomal protein uS7 family. Part of the 30S ribosomal subunit. Contacts proteins S9 and S11.

Its function is as follows. One of the primary rRNA binding proteins, it binds directly to 16S rRNA where it nucleates assembly of the head domain of the 30S subunit. Is located at the subunit interface close to the decoding center, probably blocks exit of the E-site tRNA. This is Small ribosomal subunit protein uS7 from Desulfatibacillum aliphaticivorans.